A 366-amino-acid polypeptide reads, in one-letter code: Ribosomal RNA large subunit methyltransferase M (366 aa).

Residues Ser-188, 221-224, Asp-240, Asp-260, and Asp-277 each bind S-adenosyl-L-methionine; that span reads CPGG. The Proton acceptor role is filled by Lys-306.

The protein belongs to the class I-like SAM-binding methyltransferase superfamily. RNA methyltransferase RlmE family. RlmM subfamily. Monomer.

Its subcellular location is the cytoplasm. The enzyme catalyses cytidine(2498) in 23S rRNA + S-adenosyl-L-methionine = 2'-O-methylcytidine(2498) in 23S rRNA + S-adenosyl-L-homocysteine + H(+). Functionally, catalyzes the 2'-O-methylation at nucleotide C2498 in 23S rRNA. The sequence is that of Ribosomal RNA large subunit methyltransferase M from Photorhabdus laumondii subsp. laumondii (strain DSM 15139 / CIP 105565 / TT01) (Photorhabdus luminescens subsp. laumondii).